We begin with the raw amino-acid sequence, 698 residues long: Trafficking protein particle complex III-specific subunit 85 (698 aa).

Disordered stretches follow at residues 82–125 (VGQH…LFQR) and 678–698 (VDSAPRPSEKNLTRTSVSFIG). Positions 678-689 (VDSAPRPSEKNL) are enriched in basic and acidic residues.

It belongs to the TRS85 family. As to quaternary structure, part of the multisubunit TRAPP (transport protein particle) III complex composed of BET3, BET5, TRS20, TRS23, TRS31, TRS33 and TRS85.

The protein localises to the preautophagosomal structure. Specific subunit of the TRAPP III complex that acts as an autophagy-specific guanine nucleotide exchange factor (GEF) for YPT1. TRS85 directs the TRAPP III complex to the phagophore assembly site (PAS) that is involved in autophagosome formation. Required for membrane expansion during autophagy and the CVT pathway. Required for sporulation. Has a role late in meiosis following DNA replication. The chain is Trafficking protein particle complex III-specific subunit 85 (TRS85) from Saccharomyces cerevisiae (strain ATCC 204508 / S288c) (Baker's yeast).